A 766-amino-acid chain; its full sequence is Ribonuclease Z, mitochondrial (766 aa).

The N-terminal 25 residues, 1–25 (MYLVKSAGSPIYRTLRTLTTSNLMA), are a transit peptide targeting the mitochondrion.

Belongs to the RNase Z family. Homodimer. The cofactor is Zn(2+).

It is found in the nucleus. The protein localises to the mitochondrion. It carries out the reaction Endonucleolytic cleavage of RNA, removing extra 3' nucleotides from tRNA precursor, generating 3' termini of tRNAs. A 3'-hydroxy group is left at the tRNA terminus and a 5'-phosphoryl group is left at the trailer molecule.. Zinc phosphodiesterase, which displays some tRNA 3'-processing endonuclease activity of nuclear and mitochondrial pre-tRNA. Probably involved in tRNA maturation, by removing a 3'-trailer from precursor tRNA. May participate in tRNA processing in the developing embryo. In Drosophila melanogaster (Fruit fly), this protein is Ribonuclease Z, mitochondrial.